We begin with the raw amino-acid sequence, 62 residues long: Metallothionein-4 (62 aa).

Positions 6, 8, 14, 16, 20, 22, 25, 27, 34, 35, 37, 38, 42, 45, 49, 51, 58, 60, and 61 each coordinate a divalent metal cation.

This sequence belongs to the metallothionein superfamily. Type 1 family.

Its function is as follows. Seems to bind zinc and copper. Could play a special role in regulating zinc metabolism during the differentiation of stratified epithelia. In Homo sapiens (Human), this protein is Metallothionein-4 (MT4).